Consider the following 616-residue polypeptide: Membrane protein insertase YidC (616 aa).

The helical transmembrane segment at 9–29 threads the bilayer; that stretch reads ILAVILSGLVLIAWQYFYNVP. The segment at 37-80 is disordered; sequence QQQAQAELQKTTPQPTASATPGATPQSGGAAQPSTPAAGQQAQP. A compositionally biased stretch (polar residues) spans 44 to 71; that stretch reads LQKTTPQPTASATPGATPQSGGAAQPST. 4 helical membrane-spanning segments follow: residues 388–408, 462–482, 520–540, and 559–579; these read FFGN…LLFF, LPVV…FVTI, VFGH…TMWF, and WMPL…VIYW.

This sequence belongs to the OXA1/ALB3/YidC family. Type 1 subfamily. In terms of assembly, interacts with the Sec translocase complex via SecD. Specifically interacts with transmembrane segments of nascent integral membrane proteins during membrane integration.

It is found in the cell inner membrane. Required for the insertion and/or proper folding and/or complex formation of integral membrane proteins into the membrane. Involved in integration of membrane proteins that insert both dependently and independently of the Sec translocase complex, as well as at least some lipoproteins. Aids folding of multispanning membrane proteins. The sequence is that of Membrane protein insertase YidC from Bradyrhizobium diazoefficiens (strain JCM 10833 / BCRC 13528 / IAM 13628 / NBRC 14792 / USDA 110).